Reading from the N-terminus, the 300-residue chain is MKLAVYGKGGIGKSTTSCNISIALARRGKKVLQIGCDPKHDSTFTLTGFLIPTIIDTLQAKDYHYEDVWPEDVIYQGYGEVDSVEAGGPPAGAGCGGYVVGETVKLLKELNAFYEYDVILFDVLGDVVCGGFAAPLNYADYCLIVTDNGFDALFAANRIVASVREKSKTHPLRLAGLIGNRTSKRDLIDKYVEVCPMPVIEVLPLIEDIRVSRVKGKTVFEMAETDQKLNYICDFYLNIADQLLASPEGVIPLELEDRELFTLLSTFYLTVTPQNQGETQSTISTPLTSNSASELDFILV.

ATP is bound by residues 10 to 15 (GIGKST) and Lys39. Ser14 is a Mg(2+) binding site. The [4Fe-4S] cluster site is built by Cys95 and Cys129. 180–181 (NR) contributes to the ATP binding site.

Belongs to the NifH/BchL/ChlL family. As to quaternary structure, homodimer. Protochlorophyllide reductase is composed of three subunits; ChlL, ChlN and ChlB. The cofactor is [4Fe-4S] cluster.

The protein resides in the plastid. The protein localises to the chloroplast. It carries out the reaction chlorophyllide a + oxidized 2[4Fe-4S]-[ferredoxin] + 2 ADP + 2 phosphate = protochlorophyllide a + reduced 2[4Fe-4S]-[ferredoxin] + 2 ATP + 2 H2O. It functions in the pathway porphyrin-containing compound metabolism; chlorophyll biosynthesis (light-independent). Functionally, component of the dark-operative protochlorophyllide reductase (DPOR) that uses Mg-ATP and reduced ferredoxin to reduce ring D of protochlorophyllide (Pchlide) to form chlorophyllide a (Chlide). This reaction is light-independent. The L component serves as a unique electron donor to the NB-component of the complex, and binds Mg-ATP. The chain is Light-independent protochlorophyllide reductase iron-sulfur ATP-binding protein from Auxenochlorella protothecoides (Green microalga).